Reading from the N-terminus, the 141-residue chain is MAKKVVALIKLALPAGKANPAPPVGPALGQHGVNIMAFCKEYNARTQDKVGLVIPVEISVFEDRSFTFILKTPPASVLIAKAAGIERGSGNPNKTKVGKITTAQLREIAETKLPDLNTKNVEAAMRIVEGTARNMGVTIAD.

The protein belongs to the universal ribosomal protein uL11 family. As to quaternary structure, part of the ribosomal stalk of the 50S ribosomal subunit. Interacts with L10 and the large rRNA to form the base of the stalk. L10 forms an elongated spine to which L12 dimers bind in a sequential fashion forming a multimeric L10(L12)X complex. One or more lysine residues are methylated.

Forms part of the ribosomal stalk which helps the ribosome interact with GTP-bound translation factors. The polypeptide is Large ribosomal subunit protein uL11 (Synechococcus elongatus (strain ATCC 33912 / PCC 7942 / FACHB-805) (Anacystis nidulans R2)).